Here is a 259-residue protein sequence, read N- to C-terminus: GEM-like protein 1 (259 aa).

Residues 1–11 (MSGQENHDHGR) are compositionally biased toward basic and acidic residues. The segment at 1–79 (MSGQENHDHG…PSPAPRNTMD (79 aa)) is disordered. A compositionally biased stretch (low complexity) spans 13–30 (SSTPAAASEPSKAAAHSS). Residues 138–215 (KVFKQTFDCL…NQLKAVNPST (78 aa)) enclose the GRAM domain.

This sequence belongs to the GEM family. As to quaternary structure, interacts with AFH1.

This is GEM-like protein 1 (FIP1) from Arabidopsis thaliana (Mouse-ear cress).